Consider the following 59-residue polypeptide: Large ribosomal subunit protein uL30 (59 aa).

This sequence belongs to the universal ribosomal protein uL30 family. Part of the 50S ribosomal subunit.

The chain is Large ribosomal subunit protein uL30 from Pelotomaculum thermopropionicum (strain DSM 13744 / JCM 10971 / SI).